The chain runs to 211 residues: Regulator of G-protein signaling 2 (211 aa).

The tract at residues 32 to 66 is necessary for membrane association; that stretch reads KMKRTLLKDWKTRLSYFLQNSSAPGKPKTGKKSKQ. Residues 79-116 form a necessary to inhibit protein synthesis region; that stretch reads LWAEAFDELLASKYGLAAFRAFLKSEFCEENIEFWLAC. In terms of domain architecture, RGS spans 83–199; that stretch reads AFDELLASKY…LESEFYQDLC (117 aa).

In terms of assembly, interacts with GNAQ. Does not interact with GNAI1 and GNAI3. Interacts with EIF2B5. Interacts with PRKG1 (isoform alpha). Post-translationally, phosphorylated by protein kinase C. Phosphorylation by PRKG1 leads to activation of RGS2 activity. In terms of tissue distribution, expressed in a wide variety of tissues.

It localises to the cell membrane. The protein resides in the cytoplasm. The protein localises to the nucleus. Its subcellular location is the nucleolus. Functionally, regulates G protein-coupled receptor signaling cascades. Inhibits signal transduction by increasing the GTPase activity of G protein alpha subunits, thereby driving them into their inactive GDP-bound form. It is involved in the negative regulation of the angiotensin-activated signaling pathway. Plays a role in the regulation of blood pressure in response to signaling via G protein-coupled receptors and GNAQ. Plays a role in regulating the constriction and relaxation of vascular smooth muscle. Binds EIF2B5 and blocks its activity, thereby inhibiting the translation of mRNA into protein. The protein is Regulator of G-protein signaling 2 (Rgs2) of Mus musculus (Mouse).